A 150-amino-acid chain; its full sequence is Urease accessory protein UreE (150 aa).

Belongs to the UreE family.

The protein resides in the cytoplasm. Functionally, involved in urease metallocenter assembly. Binds nickel. Probably functions as a nickel donor during metallocenter assembly. The chain is Urease accessory protein UreE from Streptococcus salivarius (strain 57.I).